We begin with the raw amino-acid sequence, 627 residues long: UvrABC system protein C (627 aa).

Positions 26-105 constitute a GIY-YIG domain; it reads PSPGVYQFRN…IKELKPRYNV (80 aa). The UVR domain maps to 219–254; that stretch reads STMIRSLTSAMQLFARELKFERAAEIKMQLESLKRY.

This sequence belongs to the UvrC family. Interacts with UvrB in an incision complex.

It is found in the cytoplasm. The UvrABC repair system catalyzes the recognition and processing of DNA lesions. UvrC both incises the 5' and 3' sides of the lesion. The N-terminal half is responsible for the 3' incision and the C-terminal half is responsible for the 5' incision. This Pelodictyon phaeoclathratiforme (strain DSM 5477 / BU-1) protein is UvrABC system protein C.